The following is a 345-amino-acid chain: Uroporphyrinogen decarboxylase (345 aa).

Substrate-binding positions include 27–31 (RQAGR), F46, D76, Y152, S207, and H320.

This sequence belongs to the uroporphyrinogen decarboxylase family. As to quaternary structure, homodimer.

It is found in the cytoplasm. It carries out the reaction uroporphyrinogen III + 4 H(+) = coproporphyrinogen III + 4 CO2. The protein operates within porphyrin-containing compound metabolism; protoporphyrin-IX biosynthesis; coproporphyrinogen-III from 5-aminolevulinate: step 4/4. Its function is as follows. Catalyzes the decarboxylation of four acetate groups of uroporphyrinogen-III to yield coproporphyrinogen-III. In Geobacillus kaustophilus (strain HTA426), this protein is Uroporphyrinogen decarboxylase.